Here is a 148-residue protein sequence, read N- to C-terminus: Transcriptional regulator MraZ (148 aa).

SpoVT-AbrB domains are found at residues 5–53 (ETAI…VEKE) and 82–125 (SALL…SEQA).

This sequence belongs to the MraZ family. As to quaternary structure, forms oligomers.

The protein localises to the cytoplasm. It localises to the nucleoid. The chain is Transcriptional regulator MraZ from Xylella fastidiosa (strain Temecula1 / ATCC 700964).